Here is a 439-residue protein sequence, read N- to C-terminus: Lipid-A-disaccharide synthase (439 aa).

This sequence belongs to the LpxB family.

The enzyme catalyses a lipid X + a UDP-2-N,3-O-bis[(3R)-3-hydroxyacyl]-alpha-D-glucosamine = a lipid A disaccharide + UDP + H(+). It functions in the pathway bacterial outer membrane biogenesis; LPS lipid A biosynthesis. Condensation of UDP-2,3-diacylglucosamine and 2,3-diacylglucosamine-1-phosphate to form lipid A disaccharide, a precursor of lipid A, a phosphorylated glycolipid that anchors the lipopolysaccharide to the outer membrane of the cell. This chain is Lipid-A-disaccharide synthase, found in Xanthomonas axonopodis pv. citri (strain 306).